The primary structure comprises 226 residues: MSQNSELRQSFIRFAVEAGVLSFGEFVTKAGRTSPYFFNAGKFSDGALLGQVAQFYAKTLLDSGVQFDMLFGPAYKGITLASATAVALAGMGRNVGFAYNRKEAKDHGEGGSLVGAKLQGRVVIVDDVISAGTSVRESVELIRNAGATPAAVLILMDRMERSGNAVDIGERSAVQDVQAQYGMPVVSIANLDDLLGYLDHAGDPALAGYRAKAAAYRDKYGVSAVV.

Lys29 serves as a coordination point for 5-phospho-alpha-D-ribose 1-diphosphate. An orotate-binding site is contributed by 37 to 38 (FF). Residues 75-76 (YK), Arg101, Lys102, Lys105, His107, and 126-134 (DDVISAGTS) contribute to the 5-phospho-alpha-D-ribose 1-diphosphate site. Positions 130 and 158 each coordinate orotate.

Belongs to the purine/pyrimidine phosphoribosyltransferase family. PyrE subfamily. In terms of assembly, homodimer. Mg(2+) serves as cofactor.

The catalysed reaction is orotidine 5'-phosphate + diphosphate = orotate + 5-phospho-alpha-D-ribose 1-diphosphate. Its pathway is pyrimidine metabolism; UMP biosynthesis via de novo pathway; UMP from orotate: step 1/2. Catalyzes the transfer of a ribosyl phosphate group from 5-phosphoribose 1-diphosphate to orotate, leading to the formation of orotidine monophosphate (OMP). This is Orotate phosphoribosyltransferase from Ralstonia nicotianae (strain ATCC BAA-1114 / GMI1000) (Ralstonia solanacearum).